We begin with the raw amino-acid sequence, 836 residues long: Conserved oligomeric Golgi complex subunit 7 (836 aa).

Coiled-coil stretches lie at residues 29 to 49 (QDSLEKHLVDLEMKLQIASEE) and 107 to 127 (LARVDNVKQRMEAAYKTLQDA). The tract at residues 246–265 (KLANERSESQRLSSGDEFQS) is disordered.

It belongs to the COG7 family. As to quaternary structure, component of the conserved oligomeric Golgi complex which is composed of eight different subunits and is required for normal Golgi morphology and localization. Interacts with COG5 and COG6.

Its subcellular location is the golgi apparatus membrane. Functionally, required for normal Golgi function. Necessary for embryo development and pigmentation, especially for the expansion of cells and organs, and for the formation of the organized shoot apical meristem (SAM). Probably involved in the generation of the extra-cellular matrix. The protein is Conserved oligomeric Golgi complex subunit 7 of Arabidopsis thaliana (Mouse-ear cress).